The sequence spans 632 residues: Extracellular metalloproteinase 5 (632 aa).

The first 20 residues, 1-20 (MHGLLLAAGLLSLPLHVLAH), serve as a signal peptide directing secretion. Residues 21–244 (PQPGTSLAGR…HNVVDYVSHA (224 aa)) constitute a propeptide that is removed on maturation. Asn284 carries an N-linked (GlcNAc...) asparagine glycan. His427 provides a ligand contact to Zn(2+). Residue Glu428 is part of the active site. His431 contributes to the Zn(2+) binding site. Residues Asn591 and Asn620 are each glycosylated (N-linked (GlcNAc...) asparagine).

Belongs to the peptidase M36 family. Zn(2+) is required as a cofactor.

Its subcellular location is the secreted. In terms of biological role, secreted metalloproteinase probably acting as a virulence factor. In Arthroderma otae (strain ATCC MYA-4605 / CBS 113480) (Microsporum canis), this protein is Extracellular metalloproteinase 5 (MEP5).